A 568-amino-acid chain; its full sequence is Proline--tRNA ligase (568 aa).

This sequence belongs to the class-II aminoacyl-tRNA synthetase family. ProS type 1 subfamily. In terms of assembly, homodimer.

It localises to the cytoplasm. The enzyme catalyses tRNA(Pro) + L-proline + ATP = L-prolyl-tRNA(Pro) + AMP + diphosphate. Catalyzes the attachment of proline to tRNA(Pro) in a two-step reaction: proline is first activated by ATP to form Pro-AMP and then transferred to the acceptor end of tRNA(Pro). As ProRS can inadvertently accommodate and process non-cognate amino acids such as alanine and cysteine, to avoid such errors it has two additional distinct editing activities against alanine. One activity is designated as 'pretransfer' editing and involves the tRNA(Pro)-independent hydrolysis of activated Ala-AMP. The other activity is designated 'posttransfer' editing and involves deacylation of mischarged Ala-tRNA(Pro). The misacylated Cys-tRNA(Pro) is not edited by ProRS. The polypeptide is Proline--tRNA ligase (Halorhodospira halophila (strain DSM 244 / SL1) (Ectothiorhodospira halophila (strain DSM 244 / SL1))).